We begin with the raw amino-acid sequence, 267 residues long: tRNA pseudouridine synthase A (267 aa).

Aspartate 51 functions as the Nucleophile in the catalytic mechanism. A substrate-binding site is contributed by tyrosine 109.

Belongs to the tRNA pseudouridine synthase TruA family. Homodimer.

It catalyses the reaction uridine(38/39/40) in tRNA = pseudouridine(38/39/40) in tRNA. Its function is as follows. Formation of pseudouridine at positions 38, 39 and 40 in the anticodon stem and loop of transfer RNAs. This Staphylococcus aureus (strain USA300) protein is tRNA pseudouridine synthase A.